A 129-amino-acid polypeptide reads, in one-letter code: Protein BUNDLE SHEATH DEFECTIVE 2, chloroplastic (129 aa).

The transit peptide at 1-43 (MAATASLTTTAPSPPALLKASAPLLISFRPVSRHCKNLCIKTK) directs the protein to the chloroplast. The segment at 49–123 (QSAKKHQKVK…AGFLGGFLST (75 aa)) adopts a CR-type zinc-finger fold. Residues Cys-62, Cys-65, Asn-68, Cys-73, Cys-76, Cys-97, Cys-100, Glu-105, Cys-108, and Cys-111 each contribute to the Zn(2+) site.

Belongs to the BSD2 chaperone family. Interacts with the RuBisCo large subunit (RbcL) assembled as an intermediate complex made of eight RbcL and eight BSD2 subunits. In terms of tissue distribution, expressed in shoot tissues, in both bundle sheath and mesophyll cells.

It is found in the plastid. The protein resides in the chloroplast stroma. In terms of biological role, chloroplast chaperone required for RuBisCo complex biogenesis and translational regulation of the RuBisCo large subunit (RbcL). Stabilizes an end-state assembly intermediate of eight RbcL subunits until the small subunits (RBCSs) become available to produce a complete stable RuBisCo complex containing eight small and eight large subunits. Involved in the differentiation of bundle sheath cells, especially chloroplast structure. The protein is Protein BUNDLE SHEATH DEFECTIVE 2, chloroplastic of Zea mays (Maize).